A 574-amino-acid polypeptide reads, in one-letter code: Potassium-transporting ATPase potassium-binding subunit (574 aa).

10 helical membrane passes run 7–27 (IELG…GTHL), 65–85 (IEYA…SYLI), 136–156 (FGLA…AAAL), 175–195 (LIRI…IILL), 264–284 (FVEM…FGLS), 292–312 (WSIW…CFIF), 390–410 (GLYG…LMIG), 427–447 (MAVL…ALAL), 494–514 (LLLG…ILAI), and 534–554 (GWLF…LNFF).

It belongs to the KdpA family. The system is composed of three essential subunits: KdpA, KdpB and KdpC.

The protein localises to the cell inner membrane. Functionally, part of the high-affinity ATP-driven potassium transport (or Kdp) system, which catalyzes the hydrolysis of ATP coupled with the electrogenic transport of potassium into the cytoplasm. This subunit binds the periplasmic potassium ions and delivers the ions to the membrane domain of KdpB through an intramembrane tunnel. This Methylacidiphilum infernorum (isolate V4) (Methylokorus infernorum (strain V4)) protein is Potassium-transporting ATPase potassium-binding subunit.